The chain runs to 371 residues: MRKIRVVVIDDSAYSRRAITKMLESMPEVEVIGYATDGEEGIRKIIDLKPDLVTLDLEMPRMDGFTLLRIVMEYSPTAVIVISSRSEDEKVFRALELGAVDFVAKPTKGVSEEILTIREDLHRKVRGVIHLNLAGIVRREREQERASVAAGRRTSGSAPYAKAAVRTESTAPRPAGRLEVVAIGASTGGPPALQRILCALPGAFPQAVVVSQHMPAGFTRTFAERLNRLSPLEICEAADGDEVRAGRVLIAPGGHNMVFERQGSEVRARIVKPGTDDRYVPSVDAMLLSCAEVFGPRTLGVVLTGMGNDGSKGVAAINRAGGQTLAEAEETAVVFGMPKEAIATGVVDKIVSLDRMSREIIQRCGLLSDVD.

A Response regulatory domain is found at 5 to 120; sequence RVVVIDDSAY…SEEILTIRED (116 aa). A 4-aspartylphosphate modification is found at Asp56. Residues 174-362 form the CheB-type methylesterase domain; the sequence is PAGRLEVVAI…LDRMSREIIQ (189 aa). Catalysis depends on residues Ser186, His213, and Asp309.

It belongs to the CheB family. In terms of processing, phosphorylated by CheA. Phosphorylation of the N-terminal regulatory domain activates the methylesterase activity.

Its subcellular location is the cytoplasm. The enzyme catalyses [protein]-L-glutamate 5-O-methyl ester + H2O = L-glutamyl-[protein] + methanol + H(+). The catalysed reaction is L-glutaminyl-[protein] + H2O = L-glutamyl-[protein] + NH4(+). Its function is as follows. Involved in chemotaxis. Part of a chemotaxis signal transduction system that modulates chemotaxis in response to various stimuli. Catalyzes the demethylation of specific methylglutamate residues introduced into the chemoreceptors (methyl-accepting chemotaxis proteins or MCP) by CheR. Also mediates the irreversible deamidation of specific glutamine residues to glutamic acid. The sequence is that of Protein-glutamate methylesterase/protein-glutamine glutaminase 3 from Geobacter sulfurreducens (strain ATCC 51573 / DSM 12127 / PCA).